The sequence spans 1501 residues: EF-hand calcium-binding domain-containing protein 6 (1501 aa).

A disordered region spans residues 18-47; sequence RKFTHSRPHSSPCRVYSRNGSPNKFRSSST. Positions 35-47 are enriched in polar residues; the sequence is RNGSPNKFRSSST. EF-hand domains are found at residues 70 to 105, 172 to 207, 297 to 332, 403 to 438, 439 to 474, 504 to 539, and 634 to 669; these read DRGDELQKAFQLLDTGQNLTVSKSELRRIITDFLMP, KNIKTVMKAFELIDVNKTGLVRPQELRRVLETFCMK, KSYEKVEKALSAGDPCKGGYVSFNYLKIVLDTFVYQ, DHSASLKKALLIINTKPDGPITREEFRYILNCMAVK, LSDSEFKELMQMLDPGDTGVVNTSMFIDLIEENCRM, RNLQAFYNMLRSYDLGDTGRIGRNNFKKIMHVFCPF, and QQDPAFKKRFLDFSKEPNGKINVHDFKKVLEDTGMP. A disordered region spans residues 699-718; the sequence is EDPPMRGPETTPPQPPTPSK. 7 EF-hand domains span residues 741-776, 847-882, 883-918, 964-999, 1069-1104, 1176-1211, and 1212-1247; these read ESFRDPYSAFFKTDADRDGIINMHDLHRLLLHLLLN, NRWSDLSKNFLETDNEGNGILRRRDIKNALYGFDIP, LTPREFEKLWARYDTEGKGHITYQEFLQKLGINYSP, DRHQDISKAFTKTDQSKTNYISICKMQEVLEECGCS, SSQLALSTAFSALDKEDTGFVKATEFGQVLKDFCYK, SHYHAITQEFENFDTMKTNTISREEFRAICNRRVQI, and LTDEQFDRLWNEMPVNAKGRLKYPDFLSRFSSETAA. Residues Asp-754, Asp-756, Asp-758, and Asp-765 each contribute to the Ca(2+) site. Phosphothreonine is present on Thr-884. The interval 1246 to 1307 is disordered; it reads AATPMATGDS…TTVIPGTPPL (62 aa). 2 stretches are compositionally biased toward polar residues: residues 1270–1279 and 1286–1301; these read GTRSALSLPT and SKSQSHPCTPASTTVI. Ser-1290 carries the post-translational modification Phosphoserine. Residues Thr-1294 and Thr-1304 each carry the phosphothreonine modification. Residues 1303–1501 are interaction with PARK7; that stretch reads GTPPLQNCDP…YNDFLRAFLQ (199 aa). 3 consecutive EF-hand domains span residues 1359-1394, 1434-1469, and 1470-1501; these read ISKEECQQLIIKYDLKSNGKFAYCDFIQSCVLLLKA, HCWRPMRRTFKSYDEAGTGLLSVADFRTVLRQYSIN, and LSEEEFFHILEYYDKTLSSKISYNDFLRAFLQ. An interaction with AR region spans residues 1407–1501; sequence NAHKMKEAGA…YNDFLRAFLQ (95 aa).

In terms of assembly, microtubule inner protein component of sperm flagellar doublet microtubules. Binds PARK7. Part of a ternary complex containing PARK7, EFCAB6/DJBP and AR. Specifically expressed in the testis.

The protein localises to the nucleus. Its subcellular location is the cytoplasm. It is found in the cytoskeleton. It localises to the flagellum axoneme. In terms of biological role, negatively regulates the androgen receptor by recruiting histone deacetylase complex, and protein DJ-1 antagonizes this inhibition by abrogation of this complex. Microtubule inner protein (MIP) part of the dynein-decorated doublet microtubules (DMTs) in cilia axoneme, which is required for motile cilia beating. The sequence is that of EF-hand calcium-binding domain-containing protein 6 from Homo sapiens (Human).